A 170-amino-acid polypeptide reads, in one-letter code: Acetyl-CoA decarbonylase/synthase complex subunit epsilon 1 (170 aa).

This sequence belongs to the CdhB family. Heterotetramer of two alpha and two epsilon subunits. The ACDS complex is made up of alpha, epsilon, beta, gamma and delta subunits with a probable stoichiometry of (alpha(2)epsilon(2))(4)-beta(8)-(gamma(1)delta(1))(8).

The protein operates within one-carbon metabolism; methanogenesis from acetate. In terms of biological role, part of a complex that catalyzes the reversible cleavage of acetyl-CoA, allowing growth on acetate as sole source of carbon and energy. The alpha-epsilon subcomponent functions as a carbon monoxide dehydrogenase. The precise role of the epsilon subunit is unclear; it may have a stabilizing role within the alpha(2)epsilon(2) component and/or be involved in electron transfer to FAD during a potential FAD-mediated CO oxidation. The polypeptide is Acetyl-CoA decarbonylase/synthase complex subunit epsilon 1 (cdhB1) (Methanosarcina thermophila).